Consider the following 249-residue polypeptide: Leucyl/phenylalanyl-tRNA--protein transferase (249 aa).

The protein belongs to the L/F-transferase family.

The protein localises to the cytoplasm. The enzyme catalyses N-terminal L-lysyl-[protein] + L-leucyl-tRNA(Leu) = N-terminal L-leucyl-L-lysyl-[protein] + tRNA(Leu) + H(+). It carries out the reaction N-terminal L-arginyl-[protein] + L-leucyl-tRNA(Leu) = N-terminal L-leucyl-L-arginyl-[protein] + tRNA(Leu) + H(+). The catalysed reaction is L-phenylalanyl-tRNA(Phe) + an N-terminal L-alpha-aminoacyl-[protein] = an N-terminal L-phenylalanyl-L-alpha-aminoacyl-[protein] + tRNA(Phe). Its function is as follows. Functions in the N-end rule pathway of protein degradation where it conjugates Leu, Phe and, less efficiently, Met from aminoacyl-tRNAs to the N-termini of proteins containing an N-terminal arginine or lysine. The protein is Leucyl/phenylalanyl-tRNA--protein transferase of Cupriavidus metallidurans (strain ATCC 43123 / DSM 2839 / NBRC 102507 / CH34) (Ralstonia metallidurans).